Here is a 344-residue protein sequence, read N- to C-terminus: Nicotinate-nucleotide--dimethylbenzimidazole phosphoribosyltransferase (344 aa).

Glu-311 functions as the Proton acceptor in the catalytic mechanism.

The protein belongs to the CobT family.

It carries out the reaction 5,6-dimethylbenzimidazole + nicotinate beta-D-ribonucleotide = alpha-ribazole 5'-phosphate + nicotinate + H(+). Its pathway is nucleoside biosynthesis; alpha-ribazole biosynthesis; alpha-ribazole from 5,6-dimethylbenzimidazole: step 1/2. Catalyzes the synthesis of alpha-ribazole-5'-phosphate from nicotinate mononucleotide (NAMN) and 5,6-dimethylbenzimidazole (DMB). In Aromatoleum aromaticum (strain DSM 19018 / LMG 30748 / EbN1) (Azoarcus sp. (strain EbN1)), this protein is Nicotinate-nucleotide--dimethylbenzimidazole phosphoribosyltransferase.